A 131-amino-acid polypeptide reads, in one-letter code: Interleukin-13 (131 aa).

A signal peptide spans 1–18 (MALWLTLVIALTCFGGLA). N-linked (GlcNAc...) asparagine glycans are attached at residues Asn39, Asn50, Asn58, and Asn74. Cystine bridges form between Cys49/Cys78 and Cys66/Cys92.

This sequence belongs to the IL-4/IL-13 family. Interacts with IL13RA2.

The protein resides in the secreted. In terms of biological role, cytokine that plays important roles in allergic inflammation and immune response to parasite infection. Synergizes with IL2 in regulating interferon-gamma synthesis. Stimulates B-cell proliferation, and activation of eosinophils, basophils, and mast cells. Plays an important role in controlling IL33 activity by modulating the production of transmembrane and soluble forms of interleukin-1 receptor-like 1/IL1RL1. Displays the capacity to antagonize Th1-driven proinflammatory immune response and downregulates synthesis of many proinflammatory cytokines including IL1, IL6, IL10, IL12 and TNF-alpha through a mechanism that partially involves suppression of NF-kappa-B. Also functions on nonhematopoietic cells, including endothelial cells where it induces vascular cell adhesion protein 1/VCAM1, which is important in the recruitment of eosinophils. Exerts its biological effects through its receptors which comprises the IL4R chain and the IL13RA1 chain, to activate JAK1 and TYK2, leading to the activation of STAT6. Aside from IL13RA1, another receptor IL13RA2 acts as a high affinity decoy for IL13 and mediates internalization and depletion of extracellular IL13. In Sus scrofa (Pig), this protein is Interleukin-13 (IL13).